Here is a 424-residue protein sequence, read N- to C-terminus: Probable carboxypeptidase AN5749 (424 aa).

The first 17 residues, 1 to 17 (MNLSILAALALVSFSTA), serve as a signal peptide directing secretion. N-linked (GlcNAc...) asparagine glycosylation is present at Asn-58. Residue Asp-139 coordinates Zn(2+). Glu-171 serves as the catalytic Proton acceptor. Glu-172 is a binding site for Zn(2+). 2 N-linked (GlcNAc...) asparagine glycosylation sites follow: Asn-184 and Asn-323.

It belongs to the peptidase M20A family. It depends on Zn(2+) as a cofactor.

Its subcellular location is the secreted. This Emericella nidulans (strain FGSC A4 / ATCC 38163 / CBS 112.46 / NRRL 194 / M139) (Aspergillus nidulans) protein is Probable carboxypeptidase AN5749.